We begin with the raw amino-acid sequence, 132 residues long: Glycine cleavage system H protein (132 aa).

The 83-residue stretch at 24–106 (IATIGLSAHA…YEEGWFIKVR (83 aa)) folds into the Lipoyl-binding domain. Lys65 carries the post-translational modification N6-lipoyllysine.

It belongs to the GcvH family. As to quaternary structure, the glycine cleavage system is composed of four proteins: P, T, L and H. The cofactor is (R)-lipoate.

Its function is as follows. The glycine cleavage system catalyzes the degradation of glycine. The H protein shuttles the methylamine group of glycine from the P protein to the T protein. This Picosynechococcus sp. (strain ATCC 27264 / PCC 7002 / PR-6) (Agmenellum quadruplicatum) protein is Glycine cleavage system H protein.